The chain runs to 88 residues: Small ribosomal subunit protein uS17c (88 aa).

Belongs to the universal ribosomal protein uS17 family. As to quaternary structure, part of the 30S ribosomal subunit.

The protein localises to the plastid. The protein resides in the cyanelle. Its function is as follows. One of the primary rRNA binding proteins, it binds specifically to the 5'-end of 16S ribosomal RNA. The chain is Small ribosomal subunit protein uS17c (rps17) from Cyanophora paradoxa.